We begin with the raw amino-acid sequence, 297 residues long: 4-hydroxy-tetrahydrodipicolinate synthase (297 aa).

Residue Thr-47 coordinates pyruvate. Residue Tyr-135 is the Proton donor/acceptor of the active site. Lys-163 functions as the Schiff-base intermediate with substrate in the catalytic mechanism. Ile-205 is a binding site for pyruvate.

Belongs to the DapA family. As to quaternary structure, homotetramer; dimer of dimers.

It localises to the cytoplasm. The enzyme catalyses L-aspartate 4-semialdehyde + pyruvate = (2S,4S)-4-hydroxy-2,3,4,5-tetrahydrodipicolinate + H2O + H(+). Its pathway is amino-acid biosynthesis; L-lysine biosynthesis via DAP pathway; (S)-tetrahydrodipicolinate from L-aspartate: step 3/4. Functionally, catalyzes the condensation of (S)-aspartate-beta-semialdehyde [(S)-ASA] and pyruvate to 4-hydroxy-tetrahydrodipicolinate (HTPA). In Dehalococcoides mccartyi (strain CBDB1), this protein is 4-hydroxy-tetrahydrodipicolinate synthase.